The following is a 198-amino-acid chain: Protein XA-1 (198 aa).

The signal sequence occupies residues 1-18 (MFFYVLLLALMAQGWSLP). The tract at residues 17–198 (LPQGKTGEDS…KHGQEQGKKH (182 aa)) is disordered. Pro residues predominate over residues 29-44 (FRPPSPPMGPSLPPPV). Positions 46–59 (HDLHRPSGHPEEFR) are enriched in basic and acidic residues. A compositionally biased stretch (basic residues) spans 76–86 (GRPKRDLHHGK). A compositionally biased stretch (basic and acidic residues) spans 95 to 104 (HTGEVLHHTD). Basic residues predominate over residues 134-145 (HGRHRRDLHHGK). Residues 181 to 198 (NSSEEKRPKHGQEQGKKH) are compositionally biased toward basic and acidic residues.

In terms of tissue distribution, expressed in the periphery of the cement gland as well as in the region of the hatching gland.

Its subcellular location is the secreted. This chain is Protein XA-1, found in Xenopus laevis (African clawed frog).